Reading from the N-terminus, the 305-residue chain is Undecaprenyl-diphosphatase (305 aa).

Transmembrane regions (helical) follow at residues 18 to 38 (GVTE…PALV), 55 to 75 (YLAF…VFFW), 103 to 123 (WLIV…EQLF), 130 to 150 (PVPA…GEVL), 187 to 207 (GVLI…RSGI), 225 to 245 (FSFL…IPEL), 246 to 266 (FGPL…ASFV), and 284 to 304 (LTPF…WLAL).

The protein belongs to the UppP family.

The protein localises to the cell membrane. It catalyses the reaction di-trans,octa-cis-undecaprenyl diphosphate + H2O = di-trans,octa-cis-undecaprenyl phosphate + phosphate + H(+). Functionally, catalyzes the dephosphorylation of undecaprenyl diphosphate (UPP). Confers resistance to bacitracin. This is Undecaprenyl-diphosphatase from Mycolicibacterium paratuberculosis (strain ATCC BAA-968 / K-10) (Mycobacterium paratuberculosis).